The following is a 235-amino-acid chain: Regulator of G-protein signaling 9-binding protein (235 aa).

Residues 1–210 are Cytoplasmic-facing; the sequence is MAREECKALL…ERGGGCDPRK (210 aa). Coiled coils occupy residues 29 to 54 and 144 to 169; these read GSAD…AVST and VADL…MKVN. The SNARE-like stretch occupies residues 153-200; the sequence is EVLQVGEMIDNMEMKVNVPRWTVQARQAAGAELLSTVSAGPSSVVSLQ. A helical; Anchor for type IV membrane protein membrane pass occupies residues 211-231; it reads ALAAILFGAVLLAAVALAVCV. Over 232–235 the chain is Extracellular; sequence AKLS.

It belongs to the RGS7BP/RGS9BP family. As to quaternary structure, specifically interacts with isoform RGS9-1 of RGS9. Component of the RGS9-1-Gbeta5 complex composed of RGS9-1, Gbeta5 (GNB5) and RGS9BP.

It localises to the membrane. Regulator of G protein-coupled receptor (GPCR) signaling in phototransduction. Participates in the recovery phase of visual transduction via its interaction with RGS9-1 isoform. Acts as a membrane-anchor that mediates the targeting of RGS9-1 to the photoreceptor outer segment, where phototransduction takes place. Enhances the ability of RGS9-1 to stimulate G protein GTPase activity, allowing the visual signal to be terminated on the physiologically time scale. It also controls the proteolytic stability of RGS9-1, probably by protecting it from degradation. This Homo sapiens (Human) protein is Regulator of G-protein signaling 9-binding protein (RGS9BP).